The following is a 100-amino-acid chain: Large ribosomal subunit protein uL23 (100 aa).

The protein belongs to the universal ribosomal protein uL23 family. Part of the 50S ribosomal subunit. Contacts protein L29, and trigger factor when it is bound to the ribosome.

Functionally, one of the early assembly proteins it binds 23S rRNA. One of the proteins that surrounds the polypeptide exit tunnel on the outside of the ribosome. Forms the main docking site for trigger factor binding to the ribosome. This chain is Large ribosomal subunit protein uL23, found in Photobacterium profundum (strain SS9).